The following is a 149-amino-acid chain: Ribonuclease pancreatic alpha-type (149 aa).

Residues Met-1 to Gly-25 form the signal peptide. Residues Lys-32 and Arg-35 each coordinate substrate. His-37 (proton acceptor) is an active-site residue. 4 disulfides stabilise this stretch: Cys-51/Cys-109, Cys-65/Cys-120, Cys-83/Cys-135, and Cys-90/Cys-97. Residues Lys-66–Thr-70, Lys-91, and Arg-110 contribute to the substrate site. The active-site Proton donor is His-144.

This sequence belongs to the pancreatic ribonuclease family. As to quaternary structure, monomer.

The protein resides in the secreted. It carries out the reaction an [RNA] containing cytidine + H2O = an [RNA]-3'-cytidine-3'-phosphate + a 5'-hydroxy-ribonucleotide-3'-[RNA].. The enzyme catalyses an [RNA] containing uridine + H2O = an [RNA]-3'-uridine-3'-phosphate + a 5'-hydroxy-ribonucleotide-3'-[RNA].. In terms of biological role, endonuclease that catalyzes the cleavage of RNA on the 3' side of pyrimidine nucleotides. Acts on single-stranded and double-stranded RNA. The protein is Ribonuclease pancreatic alpha-type of Rattus fuscipes (Bush rat).